The primary structure comprises 565 residues: Membrane protein insertase YidC (565 aa).

6 helical membrane-spanning segments follow: residues 6 to 26, 348 to 368, 370 to 390, 437 to 457, 479 to 499, and 516 to 536; these read VLLI…WGKN, LMAL…SLLH, WGWA…PLSA, GGCF…WVLV, PYFI…KLTP, and PLIF…YWVI.

It belongs to the OXA1/ALB3/YidC family. Type 1 subfamily. Interacts with the Sec translocase complex via SecD. Specifically interacts with transmembrane segments of nascent integral membrane proteins during membrane integration.

Its subcellular location is the cell inner membrane. Its function is as follows. Required for the insertion and/or proper folding and/or complex formation of integral membrane proteins into the membrane. Involved in integration of membrane proteins that insert both dependently and independently of the Sec translocase complex, as well as at least some lipoproteins. Aids folding of multispanning membrane proteins. This chain is Membrane protein insertase YidC, found in Xylella fastidiosa (strain 9a5c).